The following is a 395-amino-acid chain: Argininosuccinate synthase (395 aa).

Residues Ala9–Ser17 and Ala37 each bind ATP. Positions 87 and 92 each coordinate L-citrulline. Gly117 is an ATP binding site. 3 residues coordinate L-aspartate: Thr119, Asn123, and Asp124. Asn123 lines the L-citrulline pocket. Arg127, Ser173, Ser182, Glu258, and Tyr270 together coordinate L-citrulline.

Belongs to the argininosuccinate synthase family. Type 1 subfamily. Homotetramer.

It is found in the cytoplasm. The enzyme catalyses L-citrulline + L-aspartate + ATP = 2-(N(omega)-L-arginino)succinate + AMP + diphosphate + H(+). It functions in the pathway amino-acid biosynthesis; L-arginine biosynthesis; L-arginine from L-ornithine and carbamoyl phosphate: step 2/3. The sequence is that of Argininosuccinate synthase from Methanospirillum hungatei JF-1 (strain ATCC 27890 / DSM 864 / NBRC 100397 / JF-1).